A 346-amino-acid polypeptide reads, in one-letter code: uncharacterized protein (346 aa).

The first 28 residues, 1-28 (MFEWMKNKKAISPILALLIVLGVTIVVG), serve as a signal peptide directing secretion.

This is an uncharacterized protein from Methanocaldococcus jannaschii (strain ATCC 43067 / DSM 2661 / JAL-1 / JCM 10045 / NBRC 100440) (Methanococcus jannaschii).